Consider the following 294-residue polypeptide: MGQKIHPTGFRLAVSRNWASRWYADNRDFAGMLAEDIKVREYLKTKLKNAAVSRILIERPAKNARITIYSARPGVVIGKKGEDIESLKKELAVRLGVPVAVNIEEVRKPEIDAKLIADSITQQLEKRIMFRRAMKRAMQNAMRLGAQGIKIMSSGRLNGIEIARCEWYREGRVPLHTLRADIDYGTSEAKTTYGVIGVKVWVYKGDTLGRNDLPAVETPRPDEERRPRGPRRDGRPGGDRSGAGRGPRRPAAGNSAPADGSDKPAGAGGADNTAVKRVRKVAAPAAPAADVKGE.

The KH type-2 domain occupies 39-107 (VREYLKTKLK…PVAVNIEEVR (69 aa)). A disordered region spans residues 210 to 294 (RNDLPAVETP…AAPAADVKGE (85 aa)). A compositionally biased stretch (basic and acidic residues) spans 219 to 238 (PRPDEERRPRGPRRDGRPGG). 2 stretches are compositionally biased toward low complexity: residues 249–258 (RPAAGNSAPA) and 281–294 (VAAP…VKGE).

It belongs to the universal ribosomal protein uS3 family. As to quaternary structure, part of the 30S ribosomal subunit. Forms a tight complex with proteins S10 and S14.

Binds the lower part of the 30S subunit head. Binds mRNA in the 70S ribosome, positioning it for translation. This is Small ribosomal subunit protein uS3 from Verminephrobacter eiseniae (strain EF01-2).